Here is a 359-residue protein sequence, read N- to C-terminus: Alanine racemase, biosynthetic (359 aa).

Lys-34 (proton acceptor; specific for D-alanine) is an active-site residue. Lys-34 bears the N6-(pyridoxal phosphate)lysine mark. Arg-129 contacts substrate. Tyr-255 acts as the Proton acceptor; specific for L-alanine in catalysis. Substrate is bound at residue Met-303.

Belongs to the alanine racemase family. As to quaternary structure, monomer but homodimer in the presence of the substrate. Pyridoxal 5'-phosphate serves as cofactor.

The enzyme catalyses L-alanine = D-alanine. It functions in the pathway amino-acid biosynthesis; D-alanine biosynthesis; D-alanine from L-alanine: step 1/1. Its pathway is cell wall biogenesis; peptidoglycan biosynthesis. In terms of biological role, catalyzes the interconversion of L-alanine and D-alanine. This Shigella dysenteriae protein is Alanine racemase, biosynthetic (alr).